Consider the following 896-residue polypeptide: Rho GTPase-activating protein gacM (896 aa).

The disordered stretch occupies residues 1–97 (MSSFIGWKKN…SSNDTIGKSS (97 aa)). The segment covering 10 to 26 (NSNSGGTPGASPTSSSP) has biased composition (low complexity). The segment covering 27–38 (LNSTISNANSVS) has biased composition (polar residues). Low complexity-rich tracts occupy residues 45–57 (SISNTSSSSLSSS) and 65–97 (NSNNNSPPLSSSSSSTSTYSTPNSSNDTIGKSS). Positions 139 to 330 (QPINPNTEFG…LWIEEFDMIS (192 aa)) constitute a Rho-GAP domain. Low complexity-rich tracts occupy residues 375 to 391 (IQQQLQQQQQQQQQSHP), 400 to 427 (SSLSSSSLQVNLQTSPKSPQSPKLLLPT), 448 to 460 (PTPTTTPTLTPQT), and 473 to 506 (NNNSNNNNNNNNNNSNNNNNNNNNNNNNNNNNNN). Disordered stretches follow at residues 375–514 (IQQQ…GSPL) and 701–770 (LPTG…ENQI). Over residues 702–711 (PTGSSWSDFE) the composition is skewed to polar residues. Low complexity-rich tracts occupy residues 712–743 (NNSSNNNININNNINNSSSNNNNNNSSPNSSP) and 751–761 (SNGLNSSSNSN).

The protein localises to the cytoplasm. Rho GTPase-activating protein involved in the signal transduction pathway. In Dictyostelium discoideum (Social amoeba), this protein is Rho GTPase-activating protein gacM (gacM).